We begin with the raw amino-acid sequence, 413 residues long: F-box protein CPR1 (413 aa).

Residues 1–48 (MATIPMDIVNDIFLRLPAKTLVRCRALSKPCYHLINDPDFIESHLHRV) form the F-box domain.

In terms of assembly, part of a SCF (ASK-cullin-F-box) protein ligase complex. Interacts with SKP1A/ASK1, SPK1B/ASK2, ASK9, ASK10, ASK11, ASK13, ASK14, ASK16, ASK17, ASK18 and ASK19. Interacts with TRAF1B. In terms of tissue distribution, expressed in seedling, root, stem, leaves, inflorescence and silique, especially in veins and trichomes.

The protein localises to the cytoplasm. It is found in the nucleus. Its pathway is protein modification; protein ubiquitination. In terms of biological role, component of SCF(ASK-cullin-F-box) E3 ubiquitin ligase complexes, which may mediate the ubiquitination and subsequent proteasomal degradation of target proteins. Regulates negatively both salicylic acid (SA)-dependent and SA-independent defense signaling. The sequence is that of F-box protein CPR1 (CPR1) from Arabidopsis thaliana (Mouse-ear cress).